Consider the following 43-residue polypeptide: Neurotrophin-4 (43 aa).

This sequence belongs to the NGF-beta family.

In terms of biological role, NT-4 could play a role in oogenesis and/or early embryogenesis. NT-4 interacts with the low affinity NGF receptor and elicits neurite outgrowth from explanted dorsal root ganglia with no and lower activity in sympathetic and nodose ganglia, respectively. This is Neurotrophin-4 (NTF4) from Macrovipera lebetinus (Levantine viper).